The primary structure comprises 246 residues: Flagellar brake protein YcgR (246 aa).

In terms of domain architecture, PilZ spans 128-232; the sequence is KRAHFRAYVG…QAERQLLQAI (105 aa).

This sequence belongs to the YcgR family. In terms of assembly, monomer. Interacts with the flagellar basal bodies.

The protein resides in the bacterial flagellum basal body. Acts as a flagellar brake, regulating swimming and swarming in a bis-(3'-5') cyclic diguanylic acid (c-di-GMP)-dependent manner. Binds 1 c-di-GMP dimer per subunit. Increasing levels of c-di-GMP lead to decreased motility. This Thioalkalivibrio sulfidiphilus (strain HL-EbGR7) protein is Flagellar brake protein YcgR.